The sequence spans 1267 residues: RNA-directed RNA polymerase lambda-3 (1267 aa).

The 238-residue stretch at 555–792 (LSPTSGSAVI…KLYFIFGCRI (238 aa)) folds into the RdRp catalytic domain.

This sequence belongs to the reoviridae RNA-directed RNA polymerase family.

The protein resides in the virion. It catalyses the reaction RNA(n) + a ribonucleoside 5'-triphosphate = RNA(n+1) + diphosphate. Functionally, RNA-directed RNA polymerase that is involved in transcription and genome replication. Following infection, it catalyzes the synthesis of fully conservative plus strands. After core assembly, which consists in recruitment of one capped plus-strand for each genomic segments and polymerase complexes, the polymerase switches mode and catalyzes the synthesis of complementary minus-strands. The sequence is that of RNA-directed RNA polymerase lambda-3 (L1) from Reovirus type 3 (strain Dearing) (T3D).